We begin with the raw amino-acid sequence, 358 residues long: Phospho-N-acetylmuramoyl-pentapeptide-transferase (358 aa).

The next 10 helical transmembrane spans lie at 13–47 (LFIL…SIFI), 81–101 (MGGI…TINL), 106–126 (LILL…DDYL), 148–168 (ISII…LITI), 171–191 (SWAI…LVGI), 201–221 (LDGL…TEIL), 228–248 (LFVF…FLKY), 255–275 (IFMG…IALL), 278–298 (SIFT…SVII), and 336–356 (IVEN…VLKI).

Belongs to the glycosyltransferase 4 family. MraY subfamily. The cofactor is Mg(2+).

The protein localises to the cell inner membrane. The enzyme catalyses UDP-N-acetyl-alpha-D-muramoyl-L-alanyl-gamma-D-glutamyl-meso-2,6-diaminopimeloyl-D-alanyl-D-alanine + di-trans,octa-cis-undecaprenyl phosphate = di-trans,octa-cis-undecaprenyl diphospho-N-acetyl-alpha-D-muramoyl-L-alanyl-D-glutamyl-meso-2,6-diaminopimeloyl-D-alanyl-D-alanine + UMP. It functions in the pathway cell wall biogenesis; peptidoglycan biosynthesis. Functionally, catalyzes the initial step of the lipid cycle reactions in the biosynthesis of the cell wall peptidoglycan: transfers peptidoglycan precursor phospho-MurNAc-pentapeptide from UDP-MurNAc-pentapeptide onto the lipid carrier undecaprenyl phosphate, yielding undecaprenyl-pyrophosphoryl-MurNAc-pentapeptide, known as lipid I. In Prochlorococcus marinus (strain MIT 9301), this protein is Phospho-N-acetylmuramoyl-pentapeptide-transferase.